We begin with the raw amino-acid sequence, 363 residues long: MFKRHKSLASERRRELISRGATRSILKDDMKNFHFLSQFILSAGPLKSTSAVKHSKTIHFEIEILDAQTKKQICIVDKVTQKSTIHDVKQKFHKACPQWYPSRVGLQLERGGPFLKDNLTIQSVAASSIVTLYFTDLGQQVSWTTVFLAEYTGPLLIYLLFYLRIPYIYNMKESSRRLCHPVVHLACFCHCIHYIRYLLETLFVHKVSSGHTSLKNLLKSCAFYWGFTSWIAYYINHPRYTPPSFGYRQVAISAINFLICEAGNHFINVVLSHPSHTGNNACFPSPNYNPFTWMFFLVSCPNYTYEIGSWISFTIMTQTLPVGIFTLLMSIQMSLWAKKKHKIYLKKFSSYMHRKSAMIPFIL.

Ser37 is subject to Phosphoserine. Transmembrane regions (helical) follow at residues 143–163 (WTTVFLAEYTGPLLIYLLFYL), 216–235 (NLLKSCAFYWGFTSWIAYYI), 250–270 (VAISAINFLICEAGNHFINVV), and 311–331 (ISFTIMTQTLPVGIFTLLMSI).

The protein belongs to the steroid 5-alpha reductase family.

Its subcellular location is the membrane. The protein localises to the endoplasmic reticulum. In Bos taurus (Bovine), this protein is Trans-2,3-enoyl-CoA reductase-like (TECRL).